Here is a 451-residue protein sequence, read N- to C-terminus: F-box only protein 47 (451 aa).

Residues Leu41–Leu91 form the F-box domain.

Part of a SCF (SKP1-cullin-F-box) protein ligase complex.

Probably recognizes and binds to some phosphorylated proteins and promotes their ubiquitination and degradation. The polypeptide is F-box only protein 47 (Fbxo47) (Mus musculus (Mouse)).